A 223-amino-acid chain; its full sequence is Ras-related protein Rab-32 (223 aa).

Residue alanine 2 is modified to N-acetylalanine. 9 residues coordinate GTP: valine 34, glycine 35, lysine 36, threonine 37, serine 38, serine 49, glutamine 50, tyrosine 52, and threonine 55. Threonine 37 is a Mg(2+) binding site. Positions 46-60 (QLFSQHYRATIGVDF) match the Switch 1 motif. Threonine 55 contributes to the Mg(2+) binding site. Position 69 is a phosphoserine (serine 69). Position 79 (aspartate 79) interacts with Mg(2+). The GTP site is built by glycine 82, asparagine 141, lysine 142, aspartate 144, alanine 173, and lysine 174. Residues 82-95 (GQERFGNMTRVYYK) carry the Switch 2 motif. The PKA-RII subunit binding domain stretch occupies residues 176–195 (NINIDEATRFLVENMLANQQ). Residues cysteine 222 and cysteine 223 are each lipidated (S-geranylgeranyl cysteine).

Belongs to the small GTPase superfamily. Rab family. In terms of assembly, interacts with ANKRD27. A decreased interaction with ANKRD27 seen in the presence of SGSM2. Interacts with LRRK2 (via N-terminus); this interaction results in stimulation of RAB10 phosphorylation by LRRK2. It depends on Mg(2+) as a cofactor. As to expression, widely expressed with highest levels in liver. Strong expression also found in melanocyte, platelet, mast cell and fibroblast cell lines.

It is found in the mitochondrion. It localises to the mitochondrion outer membrane. The protein resides in the cytoplasmic vesicle. Its subcellular location is the phagosome. The protein localises to the phagosome membrane. It is found in the melanosome. It localises to the melanosome membrane. It catalyses the reaction GTP + H2O = GDP + phosphate + H(+). Regulated by guanine the nucleotide exchange factor (GEF) BLOC-3 complex composed of HPS1 and HPS4 which promote the exchange of bound GDP for free GTP. Regulated by the GTPase activating protein (GAP) SGSM2/RUTBC1 which increases the GTP hydrolysis activity. Inhibited by GDP dissociation inhibitors (GDIs) which prevent Rab-GDP dissociation. In terms of biological role, the small GTPases Rab are key regulators of intracellular membrane trafficking, from the formation of transport vesicles to their fusion with membranes. Rabs cycle between an inactive GDP-bound form and an active GTP-bound form that is able to recruit to membranes different set of downstream effectors directly responsible for vesicle formation, movement, tethering and fusion. Also acts as an A-kinase anchoring protein by binding to the type II regulatory subunit of protein kinase A and anchoring it to the mitochondrion. Also involved in synchronization of mitochondrial fission. Plays a role in the maturation of phagosomes that engulf pathogens, such as S.aureus and M.tuberculosis. Plays an important role in the control of melanin production and melanosome biogenesis. In concert with RAB38, regulates the proper trafficking of melanogenic enzymes TYR, TYRP1 and DCT/TYRP2 to melanosomes in melanocytes. Stimulates phosphorylation of RAB10 'Thr-73' by LRRK2. The sequence is that of Ras-related protein Rab-32 from Mus musculus (Mouse).